The primary structure comprises 253 residues: Imidazole glycerol phosphate synthase subunit HisF (253 aa).

Residues Asp-11 and Asp-130 contribute to the active site.

Belongs to the HisA/HisF family. As to quaternary structure, heterodimer of HisH and HisF.

The protein localises to the cytoplasm. It catalyses the reaction 5-[(5-phospho-1-deoxy-D-ribulos-1-ylimino)methylamino]-1-(5-phospho-beta-D-ribosyl)imidazole-4-carboxamide + L-glutamine = D-erythro-1-(imidazol-4-yl)glycerol 3-phosphate + 5-amino-1-(5-phospho-beta-D-ribosyl)imidazole-4-carboxamide + L-glutamate + H(+). It participates in amino-acid biosynthesis; L-histidine biosynthesis; L-histidine from 5-phospho-alpha-D-ribose 1-diphosphate: step 5/9. IGPS catalyzes the conversion of PRFAR and glutamine to IGP, AICAR and glutamate. The HisF subunit catalyzes the cyclization activity that produces IGP and AICAR from PRFAR using the ammonia provided by the HisH subunit. The chain is Imidazole glycerol phosphate synthase subunit HisF from Cereibacter sphaeroides (strain KD131 / KCTC 12085) (Rhodobacter sphaeroides).